We begin with the raw amino-acid sequence, 965 residues long: UvrABC system protein A (965 aa).

32–39 is an ATP binding site; that stretch reads GLSGSGKS. The segment at 254–281 adopts a C4-type zinc-finger fold; that stretch reads CPVCDYSLPELEPRLFSFNAPMGACPAC. ABC transporter domains follow at residues 311-588 and 608-937; these read WDRR…PRSL and PNAT…HFLA. 641–648 is a binding site for ATP; it reads GVSGSGKS. The C4-type zinc-finger motif lies at 740 to 766; it reads CEACEGDGLIKVEMHFLPDVYVPCDVC.

The protein belongs to the ABC transporter superfamily. UvrA family. Forms a heterotetramer with UvrB during the search for lesions.

The protein resides in the cytoplasm. The UvrABC repair system catalyzes the recognition and processing of DNA lesions. UvrA is an ATPase and a DNA-binding protein. A damage recognition complex composed of 2 UvrA and 2 UvrB subunits scans DNA for abnormalities. When the presence of a lesion has been verified by UvrB, the UvrA molecules dissociate. The polypeptide is UvrABC system protein A (Xylella fastidiosa (strain 9a5c)).